Here is a 124-residue protein sequence, read N- to C-terminus: Large ribosomal subunit protein bL12 (124 aa).

The segment at 94-124 (APKPVKESVPKAAAEEAKKKLEEAGAKAEIK) is disordered.

Belongs to the bacterial ribosomal protein bL12 family. Homodimer. Part of the ribosomal stalk of the 50S ribosomal subunit. Forms a multimeric L10(L12)X complex, where L10 forms an elongated spine to which 2 to 4 L12 dimers bind in a sequential fashion. Binds GTP-bound translation factors.

In terms of biological role, forms part of the ribosomal stalk which helps the ribosome interact with GTP-bound translation factors. Is thus essential for accurate translation. In Paraburkholderia phytofirmans (strain DSM 17436 / LMG 22146 / PsJN) (Burkholderia phytofirmans), this protein is Large ribosomal subunit protein bL12.